A 126-amino-acid chain; its full sequence is Histone H2B type 1-C/E/G (126 aa).

Residues 1–12 (MPEPAKSAPAPK) show a composition bias toward low complexity. The segment at 1 to 36 (MPEPAKSAPAPKKGSKKAVTKAQKKDGKKRKRSRKE) is disordered. N-acetylproline is present on proline 2. Glutamate 3 bears the ADP-ribosyl glutamic acid mark. Lysine 6 carries the post-translational modification N6-(2-hydroxyisobutyryl)lysine; alternate. Lysine 6 is modified (N6-(beta-hydroxybutyryl)lysine; alternate). Lysine 6 carries the post-translational modification N6-acetyllysine; alternate. At lysine 6 the chain carries N6-butyryllysine; alternate. Lysine 6 carries the post-translational modification N6-crotonyllysine; alternate. Lysine 6 is modified (N6-lactoyllysine; alternate). Lysine 6 participates in a covalent cross-link: Glycyl lysine isopeptide (Lys-Gly) (interchain with G-Cter in SUMO2); alternate. Position 7 is an ADP-ribosylserine (serine 7). Lysine 12 bears the N6-(beta-hydroxybutyryl)lysine; alternate mark. N6-acetyllysine; alternate occurs at positions 12 and 13. Lysine 12 and lysine 13 each carry N6-crotonyllysine; alternate. At lysine 12 the chain carries N6-lactoyllysine; alternate. N6-(2-hydroxyisobutyryl)lysine; alternate is present on lysine 13. Serine 15 is modified (phosphoserine; by STK4/MST1). An N6-acetyllysine; alternate mark is found at lysine 16, lysine 17, lysine 21, and lysine 24. Lysine 16, lysine 17, lysine 21, and lysine 24 each carry N6-crotonyllysine; alternate. An N6-lactoyllysine; alternate mark is found at lysine 16, lysine 17, lysine 21, and lysine 24. Residue lysine 17 is modified to N6-glutaryllysine; alternate. An N6-(2-hydroxyisobutyryl)lysine; alternate mark is found at lysine 21 and lysine 24. Lysine 21 bears the N6-(beta-hydroxybutyryl)lysine; alternate mark. An N6-butyryllysine; alternate modification is found at lysine 21. Lysine 21 participates in a covalent cross-link: Glycyl lysine isopeptide (Lys-Gly) (interchain with G-Cter in SUMO2); alternate. The residue at position 25 (lysine 25) is an N6-(2-hydroxyisobutyryl)lysine. Lysine 35 is modified (N6-(2-hydroxyisobutyryl)lysine; alternate). Residue lysine 35 is modified to N6-(beta-hydroxybutyryl)lysine; alternate. The residue at position 35 (lysine 35) is an N6-crotonyllysine; alternate. Residue lysine 35 is modified to N6-glutaryllysine; alternate. The residue at position 35 (lysine 35) is an N6-succinyllysine; alternate. Lysine 35 is covalently cross-linked (Glycyl lysine isopeptide (Lys-Gly) (interchain with G-Cter in ubiquitin); alternate). The residue at position 36 (glutamate 36) is a PolyADP-ribosyl glutamic acid. Phosphoserine; by AMPK is present on serine 37. An N6-(2-hydroxyisobutyryl)lysine; alternate mark is found at lysine 44, lysine 47, and lysine 58. Residue lysine 44 is modified to N6-lactoyllysine; alternate. N6-glutaryllysine; alternate is present on residues lysine 44 and lysine 47. Lysine 47 carries the post-translational modification N6-methyllysine; alternate. Lysine 58 bears the N6,N6-dimethyllysine; alternate mark. The residue at position 80 (arginine 80) is a Dimethylated arginine. Lysine 86 is subject to N6-(2-hydroxyisobutyryl)lysine; alternate. At lysine 86 the chain carries N6-acetyllysine; alternate. Lysine 86 carries the post-translational modification N6-lactoyllysine; alternate. Lysine 86 carries the post-translational modification N6,N6,N6-trimethyllysine; alternate. An omega-N-methylarginine mark is found at arginine 87 and arginine 93. Position 109 is an N6-(2-hydroxyisobutyryl)lysine; alternate (lysine 109). Lysine 109 is subject to N6-(beta-hydroxybutyryl)lysine; alternate. Lysine 109 is subject to N6-lactoyllysine; alternate. Position 109 is an N6-glutaryllysine; alternate (lysine 109). Residue lysine 109 is modified to N6-methyllysine; alternate. An O-linked (GlcNAc) serine glycan is attached at serine 113. Threonine 116 carries the post-translational modification Phosphothreonine. 2 positions are modified to N6-(2-hydroxyisobutyryl)lysine; alternate: lysine 117 and lysine 121. Lysine 117 is modified (N6-(beta-hydroxybutyryl)lysine; alternate). N6-lactoyllysine; alternate is present on residues lysine 117 and lysine 121. 2 positions are modified to N6-glutaryllysine; alternate: lysine 117 and lysine 121. Lysine 117 and lysine 121 each carry N6-succinyllysine; alternate. Lysine 117 carries the post-translational modification N6-methylated lysine; alternate. A Glycyl lysine isopeptide (Lys-Gly) (interchain with G-Cter in ubiquitin); alternate cross-link involves residue lysine 121.

This sequence belongs to the histone H2B family. The nucleosome is a histone octamer containing two molecules each of H2A, H2B, H3 and H4 assembled in one H3-H4 heterotetramer and two H2A-H2B heterodimers. The octamer wraps approximately 147 bp of DNA. Interacts with VRK1; the interaction is mediated by the nucleosome acidic patch, a cluster of negatively charged residues of H2A and H2B forming a cleft within the nucleosome core. Monoubiquitination at Lys-35 (H2BK34Ub) by the MSL1/MSL2 dimer is required for histone H3 'Lys-4' (H3K4me) and 'Lys-79' (H3K79me) methylation and transcription activation at specific gene loci, such as HOXA9 and MEIS1 loci. Similarly, monoubiquitination at Lys-121 (H2BK120Ub) by the RNF20/40 complex gives a specific tag for epigenetic transcriptional activation and is also prerequisite for histone H3 'Lys-4' and 'Lys-79' methylation. It also functions cooperatively with the FACT dimer to stimulate elongation by RNA polymerase II. H2BK120Ub also acts as a regulator of mRNA splicing: deubiquitination by USP49 is required for efficient cotranscriptional splicing of a large set of exons. In terms of processing, phosphorylated on Ser-15 (H2BS14ph) by STK4/MST1 during apoptosis; which facilitates apoptotic chromatin condensation. Also phosphorylated on Ser-15 in response to DNA double strand breaks (DSBs), and in correlation with somatic hypermutation and immunoglobulin class-switch recombination. Phosphorylation at Ser-37 (H2BS36ph) by AMPK in response to stress promotes transcription. Post-translationally, glcNAcylation at Ser-113 promotes monoubiquitination of Lys-121. It fluctuates in response to extracellular glucose, and associates with transcribed genes. ADP-ribosylated by PARP1 or PARP2 on Ser-7 (H2BS6ADPr) in response to DNA damage. H2BS6ADPr promotes recruitment of CHD1L. Mono-ADP-ribosylated on Glu-3 (H2BE2ADPr) by PARP3 in response to single-strand breaks. Poly ADP-ribosylation on Glu-36 (H2BE35ADPr) by PARP1 regulates adipogenesis: it inhibits phosphorylation at Ser-37 (H2BS36ph), thereby blocking expression of pro-adipogenetic genes. In terms of processing, crotonylation (Kcr) is specifically present in male germ cells and marks testis-specific genes in post-meiotic cells, including X-linked genes that escape sex chromosome inactivation in haploid cells. Crotonylation marks active promoters and enhancers and confers resistance to transcriptional repressors. It is also associated with post-meiotically activated genes on autosomes. Post-translationally, hydroxybutyrylation of histones is induced by starvation. Lactylated in macrophages by EP300/P300 by using lactoyl-CoA directly derived from endogenous or exogenous lactate, leading to stimulates gene transcription.

The protein resides in the nucleus. It localises to the chromosome. In terms of biological role, core component of nucleosome. Nucleosomes wrap and compact DNA into chromatin, limiting DNA accessibility to the cellular machineries which require DNA as a template. Histones thereby play a central role in transcription regulation, DNA repair, DNA replication and chromosomal stability. DNA accessibility is regulated via a complex set of post-translational modifications of histones, also called histone code, and nucleosome remodeling. The chain is Histone H2B type 1-C/E/G from Mus musculus (Mouse).